Reading from the N-terminus, the 472-residue chain is Siroheme synthase 1 (472 aa).

The interval 1-203 (MDYLPLFADL…GQLTEAENEL (203 aa)) is precorrin-2 dehydrogenase /sirohydrochlorin ferrochelatase. Residues 22 to 23 (EV) and 43 to 44 (QT) contribute to the NAD(+) site. Ser-128 carries the phosphoserine modification. A uroporphyrinogen-III C-methyltransferase region spans residues 215–472 (GEVALVGAGP…AISPSVVNLA (258 aa)). Pro-224 is a binding site for S-adenosyl-L-methionine. The active-site Proton acceptor is the Asp-247. Lys-269 functions as the Proton donor in the catalytic mechanism. Residues 300–302 (GGD), Ile-305, 330–331 (TA), Met-382, and Gly-411 contribute to the S-adenosyl-L-methionine site.

It in the N-terminal section; belongs to the precorrin-2 dehydrogenase / sirohydrochlorin ferrochelatase family. This sequence in the C-terminal section; belongs to the precorrin methyltransferase family.

It carries out the reaction uroporphyrinogen III + 2 S-adenosyl-L-methionine = precorrin-2 + 2 S-adenosyl-L-homocysteine + H(+). The enzyme catalyses precorrin-2 + NAD(+) = sirohydrochlorin + NADH + 2 H(+). The catalysed reaction is siroheme + 2 H(+) = sirohydrochlorin + Fe(2+). It participates in cofactor biosynthesis; adenosylcobalamin biosynthesis; precorrin-2 from uroporphyrinogen III: step 1/1. The protein operates within cofactor biosynthesis; adenosylcobalamin biosynthesis; sirohydrochlorin from precorrin-2: step 1/1. It functions in the pathway porphyrin-containing compound metabolism; siroheme biosynthesis; precorrin-2 from uroporphyrinogen III: step 1/1. Its pathway is porphyrin-containing compound metabolism; siroheme biosynthesis; siroheme from sirohydrochlorin: step 1/1. It participates in porphyrin-containing compound metabolism; siroheme biosynthesis; sirohydrochlorin from precorrin-2: step 1/1. Functionally, multifunctional enzyme that catalyzes the SAM-dependent methylations of uroporphyrinogen III at position C-2 and C-7 to form precorrin-2 via precorrin-1. Then it catalyzes the NAD-dependent ring dehydrogenation of precorrin-2 to yield sirohydrochlorin. Finally, it catalyzes the ferrochelation of sirohydrochlorin to yield siroheme. This is Siroheme synthase 1 from Yersinia pestis bv. Antiqua (strain Nepal516).